The sequence spans 345 residues: Anthranilate phosphoribosyltransferase (345 aa).

5-phospho-alpha-D-ribose 1-diphosphate contacts are provided by residues Gly-80, 83-84, Thr-88, 90-93, 108-116, and Ser-120; these read GD, NIST, and KHGNRSVSS. An anthranilate-binding site is contributed by Gly-80. A Mg(2+)-binding site is contributed by Ser-92. Residue Asn-111 coordinates anthranilate. Anthranilate is bound at residue Arg-166. Residues Asp-225 and Glu-226 each coordinate Mg(2+).

It belongs to the anthranilate phosphoribosyltransferase family. In terms of assembly, homodimer. It depends on Mg(2+) as a cofactor.

It catalyses the reaction N-(5-phospho-beta-D-ribosyl)anthranilate + diphosphate = 5-phospho-alpha-D-ribose 1-diphosphate + anthranilate. It participates in amino-acid biosynthesis; L-tryptophan biosynthesis; L-tryptophan from chorismate: step 2/5. In terms of biological role, catalyzes the transfer of the phosphoribosyl group of 5-phosphorylribose-1-pyrophosphate (PRPP) to anthranilate to yield N-(5'-phosphoribosyl)-anthranilate (PRA). The polypeptide is Anthranilate phosphoribosyltransferase (Desulforamulus reducens (strain ATCC BAA-1160 / DSM 100696 / MI-1) (Desulfotomaculum reducens)).